Here is a 309-residue protein sequence, read N- to C-terminus: Isethionate sulfite-lyase activating enzyme (309 aa).

In terms of domain architecture, Radical SAM core spans 22–309 (HDGPGIRTVV…VVAAEHATDG (288 aa)). C36, C40, C43, C62, C68, C71, C75, C95, C98, C102, and C106 together coordinate [4Fe-4S] cluster. 42–44 (WCS) contacts S-adenosyl-L-methionine. 2 4Fe-4S ferredoxin-type domains span residues 53 to 85 (IELAYNTGRCLTLTKCVRCVEVCTMNAITRADD) and 86 to 117 (DTISIDRALCEECGMFCAEACPSKALITYGTT). S-adenosyl-L-methionine-binding positions include G146, 195–197 (DIK), and H268.

The protein belongs to the organic radical-activating enzymes family. As to quaternary structure, monomer. [4Fe-4S] cluster serves as cofactor.

It carries out the reaction glycyl-[protein] + reduced [flavodoxin] + S-adenosyl-L-methionine = glycin-2-yl radical-[protein] + semiquinone [flavodoxin] + 5'-deoxyadenosine + L-methionine + H(+). It functions in the pathway organosulfur degradation; alkanesulfonate degradation. Its function is as follows. Involved in an anaerobic respiration pathway that converts the sulfonate isethionate (2-hydroxyethanesulfonate) to ammonia, acetate and sulfide. Catalyzes activation of the isethionate sulfite-lyase IslA under anaerobic conditions by generation of an organic free radical on a glycine residue, via a homolytic cleavage of S-adenosyl-L-methionine (SAM). The sequence is that of Isethionate sulfite-lyase activating enzyme from Oleidesulfovibrio alaskensis (strain ATCC BAA-1058 / DSM 17464 / G20) (Desulfovibrio alaskensis).